Here is a 137-residue protein sequence, read N- to C-terminus: Bet1-like protein At4g14600 (137 aa).

The Cytoplasmic portion of the chain corresponds to 1–113 (MASNPHRSGA…MSIIRSGNNH (113 aa)). Positions 43–105 (DPMHSDLDDE…KNNIRKLNMS (63 aa)) constitute a t-SNARE coiled-coil homology domain. Residues 114-134 (IMHVVLFALLVFFVLYIWSKM) form a helical; Anchor for type IV membrane protein membrane-spanning segment. At 135-137 (FKR) the chain is on the vesicular side.

This sequence belongs to the BET1 family.

Its subcellular location is the golgi apparatus membrane. The protein localises to the endoplasmic reticulum membrane. In terms of biological role, required for vesicular transport from the ER to the Golgi complex. Functions as a SNARE associated with ER-derived vesicles. This Arabidopsis thaliana (Mouse-ear cress) protein is Bet1-like protein At4g14600.